The sequence spans 478 residues: tRNA (guanine-N(7)-)-methyltransferase non-catalytic subunit TRM82 (478 aa).

WD repeat units lie at residues 14 to 53, 73 to 113, 217 to 258, and 263 to 301; these read SSADGAAWTLFGASGSKIVVQSSNGVASVWSRQAVQVLDP, EQKF…GLQQ, GHVS…HIIE, and GHEEFVSRLCVTRSGLLVSGGGDAHLLVWDWRNFLLNEK.

Belongs to the WD repeat TRM82 family. As to quaternary structure, forms a heterodimer with the catalytic subunit TRM8.

The protein resides in the nucleus. It participates in tRNA modification; N(7)-methylguanine-tRNA biosynthesis. In terms of biological role, required for the formation of N(7)-methylguanine at position 46 (m7G46) in tRNA. In the complex, it is required to stabilize and induce conformational changes of the catalytic subunit. In Phaeosphaeria nodorum (strain SN15 / ATCC MYA-4574 / FGSC 10173) (Glume blotch fungus), this protein is tRNA (guanine-N(7)-)-methyltransferase non-catalytic subunit TRM82.